The sequence spans 476 residues: Salicylate biosynthesis isochorismate synthase (476 aa).

The segment at 181 to 202 is disordered; sequence RRRPSGPTAGAQGDASAQERRQ.

The protein belongs to the isochorismate synthase family.

The catalysed reaction is chorismate = isochorismate. It participates in siderophore biosynthesis; salicylate biosynthesis. In terms of biological role, involved in the conversion of chorismate to salicylate. The protein is Salicylate biosynthesis isochorismate synthase (pchA) of Pseudomonas aeruginosa (strain ATCC 15692 / DSM 22644 / CIP 104116 / JCM 14847 / LMG 12228 / 1C / PRS 101 / PAO1).